A 137-amino-acid chain; its full sequence is NADH-quinone oxidoreductase subunit A (137 aa).

3 consecutive transmembrane segments (helical) span residues 12–32, 66–86, and 96–116; these read WGFA…LGVS, FYLV…LFAW, and TGFV…VYLF.

This sequence belongs to the complex I subunit 3 family. NDH-1 is composed of 13 different subunits. Subunits NuoA, H, J, K, L, M, N constitute the membrane sector of the complex.

It is found in the cell inner membrane. It carries out the reaction a quinone + NADH + 5 H(+)(in) = a quinol + NAD(+) + 4 H(+)(out). In terms of biological role, NDH-1 shuttles electrons from NADH, via FMN and iron-sulfur (Fe-S) centers, to quinones in the respiratory chain. The immediate electron acceptor for the enzyme in this species is believed to be ubiquinone. Couples the redox reaction to proton translocation (for every two electrons transferred, four hydrogen ions are translocated across the cytoplasmic membrane), and thus conserves the redox energy in a proton gradient. In Pseudomonas fluorescens (strain Pf0-1), this protein is NADH-quinone oxidoreductase subunit A.